We begin with the raw amino-acid sequence, 69 residues long: DNA-directed RNA polymerase subunit omega (69 aa).

The protein belongs to the RNA polymerase subunit omega family. In terms of assembly, the RNAP catalytic core consists of 2 alpha, 1 beta, 1 beta' and 1 omega subunit. When a sigma factor is associated with the core the holoenzyme is formed, which can initiate transcription.

It carries out the reaction RNA(n) + a ribonucleoside 5'-triphosphate = RNA(n+1) + diphosphate. In terms of biological role, promotes RNA polymerase assembly. Latches the N- and C-terminal regions of the beta' subunit thereby facilitating its interaction with the beta and alpha subunits. In Pelotomaculum thermopropionicum (strain DSM 13744 / JCM 10971 / SI), this protein is DNA-directed RNA polymerase subunit omega.